Reading from the N-terminus, the 553-residue chain is Mucolipin-3 (553 aa).

Residues 1 to 62 lie on the Cytoplasmic side of the membrane; that stretch reads MANPEIVISS…FWARGRKPWK (62 aa). The interval 52 to 62 is interaction with phosphoinositides; sequence KFWARGRKPWK. The helical transmembrane segment at 63–83 threads the bilayer; sequence LAIQILKIAMVTIQLVLFGLS. The Extracellular portion of the chain corresponds to 84-283; the sequence is NQMVVAFKEE…VSGSIQKNTH (200 aa). The extracellular/lumenal pore loop stretch occupies residues 104 to 118; the sequence is KGYIDRMDDTYAVYT. An N-linked (GlcNAc...) asparagine glycan is attached at N138. An intrachain disulfide couples C159 to C185. N-linked (GlcNAc...) asparagine glycosylation occurs at N205. A disulfide bridge connects residues C238 and C269. The chain crosses the membrane as a helical span at residues 284–304; it reads NMMIFDAFVILTCLVSLILCI. Topologically, residues 305-341 are cytoplasmic; that stretch reads RSVISGLQLQQEFVNFFLLHYKKDVSVSDQMEFVNGW. A helical membrane pass occupies residues 342 to 362; sequence YIMIIISDILTIIGSILKMEI. At 363-371 the chain is on the extracellular side; the sequence is QAKSLTSYD. The helical transmembrane segment at 372–392 threads the bilayer; the sequence is VCSILLGTSTMLVWLGVIRYL. Over 393–414 the chain is Cytoplasmic; that stretch reads GFFAKYNLLILTLQAALPNVIR. The chain crosses the membrane as a helical span at residues 415–435; sequence FCCCAAMIYLGYCFCGWIVLG. Residues 436–443 lie on the Extracellular side of the membrane; sequence PYHNKFRS. The pore-forming intramembrane region spans 444–464; sequence LNMVSECLFSLINGDDMFATF. Residues 456 to 459 carry the Selectivity filter motif; the sequence is NGDD. Residues 465–475 are Extracellular-facing; that stretch reads AKMQQKSYLVW. A helical membrane pass occupies residues 476–497; sequence LFSRIYLYSFISLFIYMILSLF. Residues 498–553 lie on the Cytoplasmic side of the membrane; the sequence is IALITDTYETIKHYQQDGFPETELRTFISECKDLPNSGKFRLEDDPPVSLFCCCKK.

The protein belongs to the transient receptor (TC 1.A.4) family. Polycystin subfamily. MCOLN3 sub-subfamily. Homotetramer. Can heterooligomerize with MCOLN1; heteromeric assemblies have different channel properties as compared to the respective homooligomers and may be tissue-specific. May heterooligomerize with TRPV5 to form a functional distinct ion channel. Interacts with GABARAPL2. Post-translationally, N-glycosylated.

The protein resides in the lysosome membrane. It localises to the early endosome membrane. Its subcellular location is the late endosome membrane. It is found in the cytoplasmic vesicle. The protein localises to the autophagosome membrane. The protein resides in the cell projection. It localises to the stereocilium membrane. It carries out the reaction Ca(2+)(in) = Ca(2+)(out). It catalyses the reaction Mg(2+)(in) = Mg(2+)(out). The catalysed reaction is K(+)(in) = K(+)(out). The enzyme catalyses Na(+)(in) = Na(+)(out). Its activity is regulated as follows. Channel activity is activated by PtdIns(3,5)P2 (phosphatidylinositol 3,5-bisphosphate). Inhibited by lumenal H(+) and Na(+). The channel pore shows dynamic behavior and undergoes spontaneous, Ca(2+)-dependent modulation when conducting Ca(2+). Functionally, nonselective cation channel probably playing a role in the regulation of membrane trafficking events. Acts as a Ca(2+)-permeable cation channel with inwardly rectifying activity. Mediates release of Ca(2+) from endosomes to the cytoplasm, contributes to endosomal acidification and is involved in the regulation of membrane trafficking and fusion in the endosomal pathway. Also permeable to Mg(2+), Na(+) and K(+). Does not seem to act as mechanosensory transduction channel in inner ear sensory hair cells. Proposed to play a critical role at the cochlear stereocilia ankle-link region during hair-bundle growth. Involved in the regulation of autophagy. Through association with GABARAPL2 may be involved in autophagosome formation possibly providing Ca(2+) for the fusion process. Through a possible and probably tissue-specific heteromerization with MCOLN1 may be at least in part involved in many lysosome-dependent cellular events. Possible heteromeric ion channel assemblies with TRPV5 show pharmacological similarity with TRPML3. This is Mucolipin-3 from Callithrix jacchus (White-tufted-ear marmoset).